Here is a 165-residue protein sequence, read N- to C-terminus: MRLLVVAIGRLKNGPERDLAARYRERAVALGKSLGVTACDLTEIPESRARRAADRVAEEAAAILALVPADAAVIACDERGRSDWPSERIAEKIGGWRDAGRGSLVLVIGGADGLHESVRGRADHILAFGAATLPHGLVRVLALEQVYRALTILAGHPYHRGDPEA.

Gly-109 provides a ligand contact to S-adenosyl-L-methionine.

The protein belongs to the RNA methyltransferase RlmH family. In terms of assembly, homodimer.

The protein localises to the cytoplasm. The enzyme catalyses pseudouridine(1915) in 23S rRNA + S-adenosyl-L-methionine = N(3)-methylpseudouridine(1915) in 23S rRNA + S-adenosyl-L-homocysteine + H(+). Specifically methylates the pseudouridine at position 1915 (m3Psi1915) in 23S rRNA. This chain is Ribosomal RNA large subunit methyltransferase H, found in Methylorubrum populi (strain ATCC BAA-705 / NCIMB 13946 / BJ001) (Methylobacterium populi).